Reading from the N-terminus, the 28-residue chain is DDCTTYCYGVHCCPPAFKCAASPSCKQT.

Disulfide bonds link Cys3–Cys13, Cys7–Cys19, and Cys12–Cys25.

As to expression, expressed by the venom duct.

The protein resides in the secreted. Functionally, probable neurotoxin with unknown target. Possibly targets ion channels. The sequence is that of Conotoxin Cal6.43b from Californiconus californicus (California cone).